A 289-amino-acid chain; its full sequence is Pantoate kinase (289 aa).

It belongs to the GHMP kinase family. PoK subfamily.

It catalyses the reaction (R)-pantoate + ATP = (R)-4-phosphopantoate + ADP + H(+). It participates in cofactor biosynthesis; coenzyme A biosynthesis. Functionally, phosphorylates (R)-pantoate to form (R)-4-phosphopantoate in the CoA biosynthesis pathway. ATP is the best phosphate donor. Can be replaced with UTP, with lower efficiency. This chain is Pantoate kinase, found in Methanospirillum hungatei JF-1 (strain ATCC 27890 / DSM 864 / NBRC 100397 / JF-1).